The chain runs to 310 residues: Methionyl-tRNA formyltransferase (310 aa).

Position 109–112 (109–112) interacts with (6S)-5,6,7,8-tetrahydrofolate; sequence SLLP.

The protein belongs to the Fmt family.

The enzyme catalyses L-methionyl-tRNA(fMet) + (6R)-10-formyltetrahydrofolate = N-formyl-L-methionyl-tRNA(fMet) + (6S)-5,6,7,8-tetrahydrofolate + H(+). Attaches a formyl group to the free amino group of methionyl-tRNA(fMet). The formyl group appears to play a dual role in the initiator identity of N-formylmethionyl-tRNA by promoting its recognition by IF2 and preventing the misappropriation of this tRNA by the elongation apparatus. In Pseudomonas putida (strain W619), this protein is Methionyl-tRNA formyltransferase.